Here is a 111-residue protein sequence, read N- to C-terminus: Ribosome-binding factor A (111 aa).

It belongs to the RbfA family. As to quaternary structure, monomer. Binds 30S ribosomal subunits, but not 50S ribosomal subunits or 70S ribosomes.

The protein localises to the cytoplasm. Functionally, one of several proteins that assist in the late maturation steps of the functional core of the 30S ribosomal subunit. Associates with free 30S ribosomal subunits (but not with 30S subunits that are part of 70S ribosomes or polysomes). Required for efficient processing of 16S rRNA. May interact with the 5'-terminal helix region of 16S rRNA. The chain is Ribosome-binding factor A from Helicobacter pylori (strain P12).